A 303-amino-acid polypeptide reads, in one-letter code: MIKQRTLKNVVRATGVGVHTGEKVYLTLRPAPPNTGIIFCRTDLDPVVQIPARVNYIGDTSLSTCLTKGDVRIATVEHLLSALAGVGVDNLYIDLTSPELPIMDGSAGPFVFLIQSAGIEEQNAPKEFIRIKQRVKIEEADKSVMVEPYNGFKISFGIDFDHPLFNEHNQNATLDFSSTSYVKEVSRARTFGFLSDYEFIRKNNLALGASLDNALVLDEYKILNQDGLRYPDEFVKHKILDVIGDLYLLGRSLIGSFSGVKSGHTLNSQLLKQLLATKSAWEIVTFKDPSELPFAYTPVAMTA.

Zn(2+) is bound by residues His78, His237, and Asp241. Catalysis depends on His264, which acts as the Proton donor.

Belongs to the LpxC family. Zn(2+) serves as cofactor.

It catalyses the reaction a UDP-3-O-[(3R)-3-hydroxyacyl]-N-acetyl-alpha-D-glucosamine + H2O = a UDP-3-O-[(3R)-3-hydroxyacyl]-alpha-D-glucosamine + acetate. It functions in the pathway glycolipid biosynthesis; lipid IV(A) biosynthesis; lipid IV(A) from (3R)-3-hydroxytetradecanoyl-[acyl-carrier-protein] and UDP-N-acetyl-alpha-D-glucosamine: step 2/6. Functionally, catalyzes the hydrolysis of UDP-3-O-myristoyl-N-acetylglucosamine to form UDP-3-O-myristoylglucosamine and acetate, the committed step in lipid A biosynthesis. This Coxiella burnetii (strain CbuG_Q212) (Coxiella burnetii (strain Q212)) protein is UDP-3-O-acyl-N-acetylglucosamine deacetylase.